Consider the following 99-residue polypeptide: Acylphosphatase (99 aa).

The 93-residue stretch at 5 to 97 (VRQIVIRGRV…RPGERFSQLP (93 aa)) folds into the Acylphosphatase-like domain. Catalysis depends on residues R20 and N38.

It belongs to the acylphosphatase family.

The enzyme catalyses an acyl phosphate + H2O = a carboxylate + phosphate + H(+). This is Acylphosphatase (acyP) from Nitrobacter hamburgensis (strain DSM 10229 / NCIMB 13809 / X14).